Here is a 128-residue protein sequence, read N- to C-terminus: Small ribosomal subunit protein uS12 (128 aa).

Asp89 is subject to 3-methylthioaspartic acid.

This sequence belongs to the universal ribosomal protein uS12 family. In terms of assembly, part of the 30S ribosomal subunit. Contacts proteins S8 and S17. May interact with IF1 in the 30S initiation complex.

Its function is as follows. With S4 and S5 plays an important role in translational accuracy. Interacts with and stabilizes bases of the 16S rRNA that are involved in tRNA selection in the A site and with the mRNA backbone. Located at the interface of the 30S and 50S subunits, it traverses the body of the 30S subunit contacting proteins on the other side and probably holding the rRNA structure together. The combined cluster of proteins S8, S12 and S17 appears to hold together the shoulder and platform of the 30S subunit. This Campylobacter jejuni subsp. jejuni serotype O:6 (strain 81116 / NCTC 11828) protein is Small ribosomal subunit protein uS12.